The sequence spans 142 residues: Hemoglobin subunit alpha-4 (142 aa).

At serine 1 the chain carries N-acetylserine. The 142-residue stretch at 1 to 142 folds into the Globin domain; that stretch reads SLSAKDKANV…LALALAEKYR (142 aa). Histidine 59 provides a ligand contact to O2. Position 88 (histidine 88) interacts with heme b.

Belongs to the globin family. In terms of assembly, heterotetramer of two alpha chains and two beta chains. Red blood cells.

Its function is as follows. Involved in oxygen transport from gills to the various peripheral tissues. The protein is Hemoglobin subunit alpha-4 (hba4) of Oncorhynchus mykiss (Rainbow trout).